The sequence spans 91 residues: UPF0223 protein SAB0963 (91 aa).

This sequence belongs to the UPF0223 family.

The chain is UPF0223 protein SAB0963 from Staphylococcus aureus (strain bovine RF122 / ET3-1).